The chain runs to 820 residues: Serine/threonine-protein phosphatase 4 regulatory subunit 3 (820 aa).

Positions 1 to 100 constitute a WH1 domain; that stretch reads MSDTRRRVKV…DEIWEKICQV (100 aa). Disordered regions lie at residues 687–711 and 750–820; these read EDEEEEGEAVVPPVEKTKTEDDFPE and AANG…RLGS. The span at 701-711 shows a compositional bias: basic and acidic residues; that stretch reads EKTKTEDDFPE. Positions 750-761 are enriched in polar residues; that stretch reads AANGANSTNSKS. Residues 770 to 784 are compositionally biased toward low complexity; sequence SSNGSSSKNTSLTTT. The span at 798–809 shows a compositional bias: acidic residues; it reads YPDDEDEEEEED.

The protein belongs to the SMEK family. Serine/threonine-protein phosphatase 4 (PP4) occurs in different assemblies of the catalytic and one or more regulatory subunits.

Regulatory subunit of serine/threonine-protein phosphatase 4 (PP4). This Xenopus tropicalis (Western clawed frog) protein is Serine/threonine-protein phosphatase 4 regulatory subunit 3.